Reading from the N-terminus, the 137-residue chain is Venom allergen 4 (137 aa).

The signal sequence occupies residues 1–19 (MKTFVLVSCLLVFTQIIYA).

This sequence belongs to the ant venom allergen 2/4 family. In terms of assembly, monomer. Expressed by the venom gland.

It is found in the secreted. The chain is Venom allergen 4 from Solenopsis invicta (Red imported fire ant).